Consider the following 496-residue polypeptide: Glycerol kinase (496 aa).

Residue threonine 12 participates in ADP binding. ATP contacts are provided by threonine 12, threonine 13, and serine 14. Residue threonine 12 coordinates sn-glycerol 3-phosphate. Arginine 16 provides a ligand contact to ADP. 3 residues coordinate sn-glycerol 3-phosphate: arginine 82, glutamate 83, and tyrosine 134. Positions 82, 83, and 134 each coordinate glycerol. Position 230 is a phosphohistidine; by HPr (histidine 230). Aspartate 244 serves as a coordination point for sn-glycerol 3-phosphate. Glycerol contacts are provided by aspartate 244 and glutamine 245. ADP contacts are provided by threonine 266 and glycine 309. Positions 266, 309, 313, and 410 each coordinate ATP. Positions 410 and 414 each coordinate ADP.

Belongs to the FGGY kinase family. As to quaternary structure, homotetramer and homodimer (in equilibrium). The phosphoenolpyruvate-dependent sugar phosphotransferase system (PTS), including enzyme I, and histidine-containing protein (HPr) are required for the phosphorylation, which leads to the activation of the enzyme.

The enzyme catalyses glycerol + ATP = sn-glycerol 3-phosphate + ADP + H(+). It participates in polyol metabolism; glycerol degradation via glycerol kinase pathway; sn-glycerol 3-phosphate from glycerol: step 1/1. With respect to regulation, activated by phosphorylation and inhibited by fructose 1,6-bisphosphate (FBP). Key enzyme in the regulation of glycerol uptake and metabolism. Catalyzes the phosphorylation of glycerol to yield sn-glycerol 3-phosphate. The polypeptide is Glycerol kinase (Bacillus licheniformis (strain ATCC 14580 / DSM 13 / JCM 2505 / CCUG 7422 / NBRC 12200 / NCIMB 9375 / NCTC 10341 / NRRL NRS-1264 / Gibson 46)).